Here is a 762-residue protein sequence, read N- to C-terminus: Lysyl oxidase homolog 2B (762 aa).

Positions methionine 1–alanine 20 are cleaved as a signal peptide. SRCR domains are found at residues leucine 53–serine 154, isoleucine 183–isoleucine 292, valine 316–asparagine 417, and leucine 427–serine 536. 9 disulfide bridges follow: cysteine 79–cysteine 143, cysteine 92–cysteine 153, cysteine 123–cysteine 133, cysteine 213–cysteine 281, cysteine 226–cysteine 291, cysteine 260–cysteine 270, cysteine 341–cysteine 406, cysteine 354–cysteine 416, and cysteine 385–cysteine 395. An N-linked (GlcNAc...) asparagine glycan is attached at asparagine 278. A glycan (N-linked (GlcNAc...) asparagine) is linked at asparagine 447. Cystine bridges form between cysteine 456–cysteine 522, cysteine 469–cysteine 535, and cysteine 503–cysteine 513. The tract at residues proline 540–serine 742 is lysyl-oxidase like. Residues aspartate 541 and leucine 542 each coordinate Ca(2+). Disulfide bonds link cysteine 565–cysteine 616, cysteine 571–cysteine 686, cysteine 648–cysteine 664, and cysteine 654–cysteine 676. Cu cation contacts are provided by histidine 617, histidine 619, and histidine 621. A glycan (N-linked (GlcNAc...) asparagine) is linked at asparagine 635. Residues lysine 644–tyrosine 680 constitute a cross-link (lysine tyrosylquinone (Lys-Tyr)). Tyrosine 680 is modified (2',4',5'-topaquinone). Ca(2+) contacts are provided by glutamate 713, aspartate 715, asparagine 718, and asparagine 719. A disulfide bridge connects residues cysteine 723 and cysteine 737.

The protein belongs to the lysyl oxidase family. Cu cation serves as cofactor. The cofactor is lysine tyrosylquinone residue. Post-translationally, the lysine tyrosylquinone cross-link (LTQ) is generated by condensation of the epsilon-amino group of a lysine with a topaquinone produced by oxidation of tyrosine.

The protein resides in the secreted. It localises to the extracellular space. It is found in the extracellular matrix. Its subcellular location is the basement membrane. The protein localises to the nucleus. The protein resides in the chromosome. It localises to the endoplasmic reticulum. It carries out the reaction L-lysyl-[protein] + O2 + H2O = (S)-2-amino-6-oxohexanoyl-[protein] + H2O2 + NH4(+). Mediates the post-translational oxidative deamination of lysine residues on target proteins leading to the formation of deaminated lysine (allysine). Acts as a transcription corepressor and specifically mediates deamination of trimethylated 'Lys-4' of histone H3 (H3K4me3), a specific tag for epigenetic transcriptional activation. Shows no activity against histone H3 when it is trimethylated on 'Lys-9' (H3K9me3) or 'Lys-27' (H3K27me3) or when 'Lys-4' is monomethylated (H3K4me1) or dimethylated (H3K4me2). Also mediates deamination of methylated TAF10, a member of the transcription factor IID (TFIID) complex, which induces release of TAF10 from promoters, leading to inhibition of TFIID-dependent transcription. LOXL2-mediated deamination of TAF10 results in transcriptional repression of genes required for embryonic stem cell pluripotency. Involved in epithelial to mesenchymal transition (EMT) and participates in repression of E-cadherin, probably by mediating deamination of histone H3. When secreted into the extracellular matrix, promotes cross-linking of extracellular matrix proteins by mediating oxidative deamination of peptidyl lysine residues in precursors to fibrous collagen and elastin. Acts as a regulator of sprouting angiogenesis, probably via collagen IV scaffolding. Acts as a regulator of chondrocyte differentiation, probably by regulating expression of factors that control chondrocyte differentiation. Required with loxl2a for correct expression of Sox2 and for neural differentiation. The chain is Lysyl oxidase homolog 2B (loxl2b) from Danio rerio (Zebrafish).